Reading from the N-terminus, the 729-residue chain is Polyribonucleotide nucleotidyltransferase (729 aa).

Mg(2+)-binding residues include Asp-516 and Asp-522. The region spanning 581-641 is the KH domain; sequence PSTEHFSINP…EKVAAAKEHI (61 aa). One can recognise an S1 motif domain in the interval 658-725; the sequence is GKTYVGKVKK…KGKKVELATP (68 aa).

It belongs to the polyribonucleotide nucleotidyltransferase family. It depends on Mg(2+) as a cofactor.

It localises to the cytoplasm. The catalysed reaction is RNA(n+1) + phosphate = RNA(n) + a ribonucleoside 5'-diphosphate. Functionally, involved in mRNA degradation. Catalyzes the phosphorolysis of single-stranded polyribonucleotides processively in the 3'- to 5'-direction. This is Polyribonucleotide nucleotidyltransferase from Sulfurovum sp. (strain NBC37-1).